The following is a 700-amino-acid chain: Glycine--tRNA ligase beta subunit (700 aa).

This sequence belongs to the class-II aminoacyl-tRNA synthetase family. Tetramer of two alpha and two beta subunits.

It localises to the cytoplasm. It carries out the reaction tRNA(Gly) + glycine + ATP = glycyl-tRNA(Gly) + AMP + diphosphate. The protein is Glycine--tRNA ligase beta subunit of Helicobacter pylori (strain Shi470).